The sequence spans 452 residues: Elongation factor Tu, mitochondrial (452 aa).

The N-terminal 43 residues, Met1–Leu43, are a transit peptide targeting the mitochondrion. In terms of domain architecture, tr-type G spans Lys55 to Thr251. Residues Gly64–Thr71 are G1. Residues Asp67, Gly69, Lys70, Thr71, and Thr72 each contribute to the GTP site. Thr71 lines the Mg(2+) pocket. Lys79 carries the post-translational modification N6-acetyllysine. An N6-acetyllysine; alternate modification is found at Lys88. Lys88 carries the post-translational modification N6-succinyllysine; alternate. Positions Gly105–Asn109 are G2. The tract at residues Asp126–Gly129 is G3. Residues Asn181, Asp184, Ser219, Ala220, and Leu221 each coordinate GTP. A G4 region spans residues Asn181–Asp184. Residues Ser219–Leu221 form a G5 region. Lys234 is modified (N6-succinyllysine). Lys256 is modified (N6-acetyllysine). Position 278 is a phosphothreonine (Thr278). N6-succinyllysine is present on Lys286. Residue Ser312 is modified to Phosphoserine. N6-acetyllysine occurs at positions 361 and 418.

This sequence belongs to the TRAFAC class translation factor GTPase superfamily. Classic translation factor GTPase family. EF-Tu/EF-1A subfamily. In terms of assembly, interacts with NLRX1. Interacts with ATG16L1.

Its subcellular location is the mitochondrion. The catalysed reaction is GTP + H2O = GDP + phosphate + H(+). Its function is as follows. GTP hydrolase that promotes the GTP-dependent binding of aminoacyl-tRNA to the A-site of ribosomes during protein biosynthesis. Plays a role in the regulation of autophagy and innate immunity. Recruits ATG5-ATG12 and NLRX1 at mitochondria and serves as a checkpoint of the RIGI-MAVS pathway. In turn, inhibits RLR-mediated type I interferon while promoting autophagy. This Rattus norvegicus (Rat) protein is Elongation factor Tu, mitochondrial.